The following is a 451-amino-acid chain: Phosphoglucosamine mutase (451 aa).

Ser-101 (phosphoserine intermediate) is an active-site residue. The Mg(2+) site is built by Ser-101, Asp-243, Asp-245, and Asp-247. Ser-101 is modified (phosphoserine).

Belongs to the phosphohexose mutase family. It depends on Mg(2+) as a cofactor. In terms of processing, activated by phosphorylation.

The catalysed reaction is alpha-D-glucosamine 1-phosphate = D-glucosamine 6-phosphate. Its function is as follows. Catalyzes the conversion of glucosamine-6-phosphate to glucosamine-1-phosphate. This is Phosphoglucosamine mutase from Thermodesulfovibrio yellowstonii (strain ATCC 51303 / DSM 11347 / YP87).